Reading from the N-terminus, the 228-residue chain is Phosphoglycolate phosphatase (228 aa).

Asp12 functions as the Nucleophile in the catalytic mechanism. Residues Asp12, Asp14, and Asp177 each contribute to the Mg(2+) site.

This sequence belongs to the HAD-like hydrolase superfamily. CbbY/CbbZ/Gph/YieH family. It depends on Mg(2+) as a cofactor.

It catalyses the reaction 2-phosphoglycolate + H2O = glycolate + phosphate. It functions in the pathway organic acid metabolism; glycolate biosynthesis; glycolate from 2-phosphoglycolate: step 1/1. Functionally, specifically catalyzes the dephosphorylation of 2-phosphoglycolate. Is involved in the dissimilation of the intracellular 2-phosphoglycolate formed during the DNA repair of 3'-phosphoglycolate ends, a major class of DNA lesions induced by oxidative stress. This chain is Phosphoglycolate phosphatase, found in Vibrio vulnificus (strain CMCP6).